Consider the following 898-residue polypeptide: Phosphoenolpyruvate carboxylase (898 aa).

Active-site residues include His138 and Lys561.

It belongs to the PEPCase type 1 family. Mg(2+) serves as cofactor.

It carries out the reaction oxaloacetate + phosphate = phosphoenolpyruvate + hydrogencarbonate. In terms of biological role, forms oxaloacetate, a four-carbon dicarboxylic acid source for the tricarboxylic acid cycle. This is Phosphoenolpyruvate carboxylase from Streptococcus suis (strain 98HAH33).